The primary structure comprises 1141 residues: DNA-directed RNA polymerase subunit beta (1141 aa).

This sequence belongs to the RNA polymerase beta chain family. In terms of assembly, the RNAP catalytic core consists of 2 alpha, 1 beta, 1 beta' and 1 omega subunit. When a sigma factor is associated with the core the holoenzyme is formed, which can initiate transcription.

It catalyses the reaction RNA(n) + a ribonucleoside 5'-triphosphate = RNA(n+1) + diphosphate. Its function is as follows. DNA-dependent RNA polymerase catalyzes the transcription of DNA into RNA using the four ribonucleoside triphosphates as substrates. This chain is DNA-directed RNA polymerase subunit beta, found in Frankia alni (strain DSM 45986 / CECT 9034 / ACN14a).